The sequence spans 273 residues: Large ribosomal subunit protein uL2 (273 aa).

2 disordered regions span residues 31–50 and 221–273; these read APLL…GRIT and RGTA…RRGK. Positions 253–273 are enriched in basic residues; that stretch reads KGKKTRHNKRTDKYIVRRRGK.

It belongs to the universal ribosomal protein uL2 family. Part of the 50S ribosomal subunit. Forms a bridge to the 30S subunit in the 70S ribosome.

Its function is as follows. One of the primary rRNA binding proteins. Required for association of the 30S and 50S subunits to form the 70S ribosome, for tRNA binding and peptide bond formation. It has been suggested to have peptidyltransferase activity; this is somewhat controversial. Makes several contacts with the 16S rRNA in the 70S ribosome. The chain is Large ribosomal subunit protein uL2 from Actinobacillus pleuropneumoniae serotype 7 (strain AP76).